Here is a 608-residue protein sequence, read N- to C-terminus: MSTHESADQAGTPQYGTAHSAASAAPHYSAAFGATSLPGSQPVSAQEYDAVLRRLSAAEATRDNMSRQIRGAGEKNRKLVEAITSMRYQVERLRASLSQNVMPPLNSAIVLAVHEGQTMTYEQVADDKTPAEIDTYLDVQVSGRMMRIPVSPLIDLSTLTPGMTVLLNDKTEAVLALDTEPFGDVVTVREVLDEQRVLVDTSSGAQQVARVAGSLNIEQLRTGDAVTLDTRTRMLTSQVPASRSQELVLEEIPDVTYEQIGGLGAQIEQIRDAVELPYLHPEIFERYHLAPPKGILLYGPPGNGKTMIAKAVANSLAARAAALNPGSATRGYFLNIKGPELLDKFVGETERQIRDIFVAAREKAEAGHPVVVFFDEMESLFRMRGSGRSSDIETTIVPQLLAEIDGVESLQNVIVIGATNREDLIDAAVMRPGRLDLKIRINRPDAAGAAEIFGLYLTEDLPLDATEVAAAGSTRAALTAMIAAAAGQLYARTPSTAYAVATVDSSMVVGSGASANLSTHTLYRGDFASGAVIRNIVDRAKKAAIKEQLQALTAGADASSVGIGTRHLLEAVRAEFEDQVDLPPLPDIEDALTVAGVRGRLVSVEPPR.

A coiled-coil region spans residues 45–79 (AQEYDAVLRRLSAAEATRDNMSRQIRGAGEKNRKL). 302–307 (GNGKTM) provides a ligand contact to ATP.

This sequence belongs to the AAA ATPase family. Homohexamer. Assembles into a hexameric ring structure.

The sequence is that of AAA ATPase forming ring-shaped complexes from Rothia mucilaginosa (strain DY-18) (Stomatococcus mucilaginosus).